A 220-amino-acid polypeptide reads, in one-letter code: Adenylate kinase (220 aa).

Residue 13-18 (GAGKGT) participates in ATP binding. An NMP region spans residues 33–62 (ATGDMLRSQVARQTELGKEAKKIMDQGGLV). AMP contacts are provided by residues T34, R39, 60 to 62 (GLV), 89 to 92 (GFPR), and Q96. The tract at residues 130-167 (GRLVHPGSGRSYHLEFNPPKVPMKDDVTGEPLIQRSDD) is LID. Residues R131 and 140–141 (SY) each bind ATP. Residues R164 and R175 each coordinate AMP. Q203 lines the ATP pocket.

It belongs to the adenylate kinase family. AK2 subfamily. In terms of assembly, monomer.

It localises to the cytoplasm. The protein resides in the cytosol. Its subcellular location is the mitochondrion intermembrane space. The protein localises to the nucleus. It carries out the reaction AMP + ATP = 2 ADP. Its function is as follows. Catalyzes the reversible transfer of the terminal phosphate group between ATP and AMP. Plays an important role in cellular energy homeostasis and in adenine nucleotide metabolism. Adenylate kinase activity is critical for regulation of the phosphate utilization and the AMP de novo biosynthesis pathways. The protein is Adenylate kinase (adk1) of Schizosaccharomyces pombe (strain 972 / ATCC 24843) (Fission yeast).